Here is a 353-residue protein sequence, read N- to C-terminus: Fe(3+) ions import ATP-binding protein FbpC (353 aa).

In terms of domain architecture, ABC transporter spans 9 to 239 (VTFENVTKKF…PASAFIADFM (231 aa)). An ATP-binding site is contributed by 41–48 (GPSGCGKT).

The protein belongs to the ABC transporter superfamily. Fe(3+) ion importer (TC 3.A.1.10) family. As to quaternary structure, the complex is composed of two ATP-binding proteins (FbpC), two transmembrane proteins (FbpB) and a solute-binding protein (FbpA).

The protein resides in the cell inner membrane. The enzyme catalyses Fe(3+)(out) + ATP + H2O = Fe(3+)(in) + ADP + phosphate + H(+). Its function is as follows. Part of the ABC transporter complex FbpABC involved in Fe(3+) ions import. Responsible for energy coupling to the transport system. The sequence is that of Fe(3+) ions import ATP-binding protein FbpC from Brucella suis biovar 1 (strain 1330).